The chain runs to 116 residues: uncharacterized protein (116 aa).

Residues 22–42 traverse the membrane as a helical segment; the sequence is LIFLVVNLKVPAVGLELFLLV.

It is found in the membrane. This is an uncharacterized protein from Saccharomyces cerevisiae (strain ATCC 204508 / S288c) (Baker's yeast).